An 830-amino-acid polypeptide reads, in one-letter code: G-type lectin S-receptor-like serine/threonine-protein kinase SD1-13 (830 aa).

The signal sequence occupies residues 1–21 (MGCLLILLLTLICFSLRLCLA). The Bulb-type lectin domain occupies 22–145 (TDVITFSSEF…TNTGDEILWE (124 aa)). At 22–434 (TDVITFSSEF…SEFKKRTNRS (413 aa)) the chain is on the extracellular side. N-linked (GlcNAc...) asparagine glycosylation is found at N40, N53, and N82. One can recognise an EGF-like; atypical domain in the interval 283–321 (PSTKCDTYATCGQFASCRFNPGSTPPCMCIRGFKPQSYA). 2 disulfide bridges follow: C287–C299 and C293–C309. Residues N327, N384, and N432 are each glycosylated (N-linked (GlcNAc...) asparagine). Positions 340–423 (CESRDNNDGS…TGVVFYIRLA (84 aa)) constitute a PAN domain. Intrachain disulfides connect C377/C398 and C381/C387. Residues 435 to 455 (IVITVTLLVGAFLFAGTVVLA) traverse the membrane as a helical segment. At 456 to 830 (LWKIAKHREK…NVSLTKITGR (375 aa)) the chain is on the cytoplasmic side. The region spanning 512 to 798 (FSITNKLGQG…NLPEPKQPAF (287 aa)) is the Protein kinase domain. ATP-binding positions include 518 to 526 (LGQGGFGAV) and K540. Position 545 is a phosphothreonine (T545). 2 positions are modified to phosphoserine: S546 and S561. The segment at 601–618 (VKQRLLDWKTRFNIIDGI) is caM-binding. D637 (proton acceptor) is an active-site residue. A phosphoserine mark is found at S641, S654, and S670. Phosphothreonine is present on T671. S714, S715, S726, S805, S809, S810, S813, S818, and S823 each carry phosphoserine. A disordered region spans residues 789–830 (NLPEPKQPAFIPRRGTSEVESSGQSDPRASINNVSLTKITGR). Residues 806 to 830 (EVESSGQSDPRASINNVSLTKITGR) are compositionally biased toward polar residues. Phosphothreonine is present on residues T825 and T828.

It belongs to the protein kinase superfamily. Ser/Thr protein kinase family. In terms of assembly, interacts with PUB9, PUB13 and PUB14. Binds to calmodulin (CaM) in a Ca(2+)-dependent manner. In terms of processing, autophosphorylated. As to expression, mostly expressed in rosette leaves, and, to a lower extent, in cauline leaves and stems.

The protein resides in the cell membrane. The catalysed reaction is L-seryl-[protein] + ATP = O-phospho-L-seryl-[protein] + ADP + H(+). It carries out the reaction L-threonyl-[protein] + ATP = O-phospho-L-threonyl-[protein] + ADP + H(+). Its function is as follows. Receptor-like serine/threonine-protein kinase that represses the disease resistance signaling pathway triggered in response to bacterial pathogen such as Pseudomonas syringae pv. tomato. This Arabidopsis thaliana (Mouse-ear cress) protein is G-type lectin S-receptor-like serine/threonine-protein kinase SD1-13 (SD113).